Consider the following 318-residue polypeptide: Protein teg (318 aa).

Residues 7 to 182 form the PNPLA domain; the sequence is ITFDGGGTLG…VATNTSTASI (176 aa). A GXGXXG motif is present at residues 11–16; that stretch reads GGGTLG. Positions 42 to 46 match the GXSXG motif; the sequence is GNSIG. Residue S44 is the Nucleophile of the active site. D169 serves as the catalytic Proton acceptor.

In terms of biological role, probable lipid hydrolase. The polypeptide is Protein teg (teg) (Priestia megaterium (strain ATCC 14581 / DSM 32 / CCUG 1817 / JCM 2506 / NBRC 15308 / NCIMB 9376 / NCTC 10342 / NRRL B-14308 / VKM B-512 / Ford 19) (Bacillus megaterium)).